Consider the following 340-residue polypeptide: Alpha-1,3-galactosyltransferase 2 (340 aa).

At 1-12 (MALKEGLRAWKR) the chain is on the cytoplasmic side. Residues 13–32 (IFWRQILLTLGLLGLFLYGL) traverse the membrane as a helical; Signal-anchor for type II membrane protein segment. Topologically, residues 33–340 (PKFRHLEALI…APKGYRLLRN (308 aa)) are lumenal. Asn-58 and Asn-100 each carry an N-linked (GlcNAc...) asparagine glycan. Residues Asp-199 and Asp-201 each contribute to the Mn(2+) site.

The protein belongs to the glycosyltransferase 6 family. Mn(2+) is required as a cofactor. As to expression, expressed in thymus and monocyte derived dendritic cells.

Its subcellular location is the golgi apparatus. It is found in the golgi stack membrane. It catalyses the reaction a beta-D-galactosyl-(1-&gt;4)-N-acetyl-beta-D-glucosaminyl derivative + UDP-alpha-D-galactose = an alpha-D-galactosyl-(1-&gt;3)-beta-D-galactosyl-(1-&gt;4)-N-acetyl-beta-D-glucosaminyl derivative + UDP + H(+). The catalysed reaction is a beta-D-Gal-(1-&gt;4)-beta-D-Glc-(1&lt;-&gt;1)-Cer(d18:1(4E)) + UDP-alpha-D-galactose = an isogloboside iGb3Cer (d18:1(4E)) + UDP + H(+). It carries out the reaction a globoside Gb3Cer + UDP-alpha-D-galactose = a globoside GalGb3Cer + UDP + H(+). Functionally, synthesizes the galactose-alpha(1,3)-galactose group on the glycosphingolipid isoglobotrihexosylceramide or isogloboside 3 (iGb3) by catalyzing the transfer of galactose from UDP-Galactose to its acceptor molecule Gal-beta-1,4-Glc-ceramide. Can also catalyze the addition of galactose to iGb3 itself to form polygalactose structures. This is Alpha-1,3-galactosyltransferase 2 from Homo sapiens (Human).